A 1456-amino-acid polypeptide reads, in one-letter code: Macrophage mannose receptor 1 (1456 aa).

A signal peptide spans 1–19 (MRLLLLLAFISVIPVSVQL). Residues 20–1388 (LDARQFLIYN…DPQPKGSSKA (1369 aa)) are Extracellular-facing. The 121-residue stretch at 22-142 (ARQFLIYNED…SGLWSRWKVY (121 aa)) folds into the Ricin B-type lectin domain. 7 disulfide bridges follow: cysteine 35–cysteine 49, cysteine 74–cysteine 91, cysteine 102–cysteine 149, cysteine 168–cysteine 194, cysteine 182–cysteine 209, cysteine 247–cysteine 340, and cysteine 316–cysteine 332. Residue asparagine 104 is glycosylated (N-linked (GlcNAc...) asparagine). Residues 163–211 (ANGAVCAFPFKFENKWYADCTSAGRSDGWLWCGTTTDYDKDKLFGFCPL) form the Fibronectin type-II domain. The region spanning 225–341 (LTGILYQINS…CVQKLGYICK (117 aa)) is the C-type lectin 1 domain. The N-linked (GlcNAc...) asparagine glycan is linked to asparagine 344. C-type lectin domains are found at residues 369–487 (YAGH…YICK), 511–626 (HGFY…FVCK), 655–778 (KTSM…WICQ), and 807–923 (YKDY…FICQ). 2 cysteine pairs are disulfide-bonded: cysteine 391–cysteine 486 and cysteine 463–cysteine 478. N-linked (GlcNAc...) asparagine glycosylation occurs at asparagine 529. Disulfide bonds link cysteine 532-cysteine 625, cysteine 600-cysteine 617, cysteine 680-cysteine 777, cysteine 753-cysteine 769, cysteine 828-cysteine 922, and cysteine 899-cysteine 914. N-linked (GlcNAc...) asparagine glycosylation is found at asparagine 926 and asparagine 930. C-type lectin domains lie at 951–1079 (YKNK…YICQ), 1101–1212 (YGKS…FLCK), and 1240–1355 (FYGH…FICK). 6 cysteine pairs are disulfide-bonded: cysteine 976–cysteine 1078, cysteine 1051–cysteine 1070, cysteine 1122–cysteine 1211, cysteine 1189–cysteine 1203, cysteine 1262–cysteine 1354, and cysteine 1331–cysteine 1346. N-linked (GlcNAc...) asparagine glycosylation occurs at asparagine 1159. A glycan (N-linked (GlcNAc...) asparagine) is linked at asparagine 1204. A helical membrane pass occupies residues 1389–1409 (AGVVTVVLLIVIGAGVAAYFF). Residues 1410–1456 (YKKRHALHIPQEATFENTLYFNSNLSPGTSDTKDLMGNIEQNEHAII) lie on the Cytoplasmic side of the membrane.

As to expression, detected in macrophages.

The protein localises to the endosome membrane. It is found in the cell membrane. Functionally, mediates the endocytosis of glycoproteins by macrophages. Binds both sulfated and non-sulfated polysaccharide chains. Acts as phagocytic receptor for bacteria, fungi and other pathogens. This is Macrophage mannose receptor 1 (Mrc1) from Mus musculus (Mouse).